The primary structure comprises 262 residues: Putative glutamine--fructose-6-phosphate aminotransferase [isomerizing] (262 aa).

C2 acts as the Nucleophile; for GATase activity in catalysis. The Glutamine amidotransferase type-2 domain maps to 2–262 (CGIFGYCNFL…RKSPPFVHNT (261 aa)).

It carries out the reaction D-fructose 6-phosphate + L-glutamine = D-glucosamine 6-phosphate + L-glutamate. The protein operates within nucleotide-sugar biosynthesis; UDP-N-acetyl-alpha-D-glucosamine biosynthesis; alpha-D-glucosamine 6-phosphate from D-fructose 6-phosphate: step 1/1. In terms of biological role, involved in amino sugar synthesis (formation of chitin, supplies the amino sugars of asparagine-linked oligosaccharides of glycoproteins). This is Putative glutamine--fructose-6-phosphate aminotransferase [isomerizing] from Saccharomyces cerevisiae (strain ATCC 204508 / S288c) (Baker's yeast).